Consider the following 308-residue polypeptide: N-acetylmuramic acid 6-phosphate etherase (308 aa).

Residues 62–225 enclose the SIS domain; it reads ITDAFKVGGR…TTASMIRLGK (164 aa). Glu-90 (proton donor) is an active-site residue. Residue Glu-121 is part of the active site.

It belongs to the GCKR-like family. MurNAc-6-P etherase subfamily. In terms of assembly, homodimer.

It catalyses the reaction N-acetyl-D-muramate 6-phosphate + H2O = N-acetyl-D-glucosamine 6-phosphate + (R)-lactate. Its pathway is amino-sugar metabolism; 1,6-anhydro-N-acetylmuramate degradation. It participates in amino-sugar metabolism; N-acetylmuramate degradation. The protein operates within cell wall biogenesis; peptidoglycan recycling. Functionally, specifically catalyzes the cleavage of the D-lactyl ether substituent of MurNAc 6-phosphate, producing GlcNAc 6-phosphate and D-lactate. Together with AnmK, is also required for the utilization of anhydro-N-acetylmuramic acid (anhMurNAc) either imported from the medium or derived from its own cell wall murein, and thus plays a role in cell wall recycling. In Vibrio campbellii (strain ATCC BAA-1116), this protein is N-acetylmuramic acid 6-phosphate etherase.